The primary structure comprises 161 residues: Short form salivary protein D7S (161 aa).

The N-terminal stretch at 1 to 18 (MKFPSILLAILLFKPITA) is a signal peptide. Disulfide bonds link cysteine 33/cysteine 67, cysteine 47/cysteine 155, and cysteine 109/cysteine 125.

The protein belongs to the PBP/GOBP family.

The protein localises to the secreted. Functionally, in contrast to the related D7 salivary proteins, does not bind serotonin. The sequence is that of Short form salivary protein D7S from Culex quinquefasciatus (Southern house mosquito).